The chain runs to 262 residues: 4-hydroxy-tetrahydrodipicolinate reductase (262 aa).

9–14 (GCLGRM) contributes to the NAD(+) binding site. Arg-36 is a binding site for NADP(+). NAD(+) contacts are provided by residues 100–102 (GTT) and 121–124 (SANM). The active-site Proton donor/acceptor is the His-154. His-155 contacts (S)-2,3,4,5-tetrahydrodipicolinate. Lys-158 functions as the Proton donor in the catalytic mechanism. 164–165 (GT) contacts (S)-2,3,4,5-tetrahydrodipicolinate.

It belongs to the DapB family.

The protein localises to the cytoplasm. The catalysed reaction is (S)-2,3,4,5-tetrahydrodipicolinate + NAD(+) + H2O = (2S,4S)-4-hydroxy-2,3,4,5-tetrahydrodipicolinate + NADH + H(+). It carries out the reaction (S)-2,3,4,5-tetrahydrodipicolinate + NADP(+) + H2O = (2S,4S)-4-hydroxy-2,3,4,5-tetrahydrodipicolinate + NADPH + H(+). The protein operates within amino-acid biosynthesis; L-lysine biosynthesis via DAP pathway; (S)-tetrahydrodipicolinate from L-aspartate: step 4/4. Functionally, catalyzes the conversion of 4-hydroxy-tetrahydrodipicolinate (HTPA) to tetrahydrodipicolinate. This Wolbachia pipientis subsp. Culex pipiens (strain wPip) protein is 4-hydroxy-tetrahydrodipicolinate reductase.